A 408-amino-acid polypeptide reads, in one-letter code: Cobalt-precorrin-5B C(1)-methyltransferase (408 aa).

Belongs to the CbiD family.

It carries out the reaction Co-precorrin-5B + S-adenosyl-L-methionine = Co-precorrin-6A + S-adenosyl-L-homocysteine. The protein operates within cofactor biosynthesis; adenosylcobalamin biosynthesis; cob(II)yrinate a,c-diamide from sirohydrochlorin (anaerobic route): step 6/10. Its function is as follows. Catalyzes the methylation of C-1 in cobalt-precorrin-5B to form cobalt-precorrin-6A. This is Cobalt-precorrin-5B C(1)-methyltransferase from Clostridioides difficile (strain 630) (Peptoclostridium difficile).